The chain runs to 429 residues: MSGKQVVILLGSVLILGCLQVAAATETDNKTNDFVATDEWQTIAEGQAIPRGLHVRINLQTGLKEAKLLDESERGTSLQSQPDDQNARESHDDNEPLALDYKPDIIEESIRRVKEQKKSYAELRKAYKEFQKNFRTDGELIVQLIDQFRNFSRTPLESEMRSKLDCLENLEYLLHQIDNALMFIDNGGLDDVLLPIVVNDTSTSLRVSAMRVLGSLASNNPKAQIKVFEKNFGSHLAQILTSSGNVGEISAALHAFGALLRKFPLAQQRVLSTSGTQALIKVLQSPDVELRSKAKVVTLISDLVLEKRSVLDVSKDDPEASSTMAQYVLLDFESWLKTPGYCAAVDTVLTKEFLLLLEQPEVVEQFATALETTEDMCTSTWSQSSGLRHALLTVRNRYANSTDEYRLEVSQILAKLCERLFNKPKHTEL.

A signal peptide spans 1 to 24; that stretch reads MSGKQVVILLGSVLILGCLQVAAA. N29 carries an N-linked (GlcNAc...) asparagine glycan. The segment at 70-98 is disordered; it reads DESERGTSLQSQPDDQNARESHDDNEPLA. A compositionally biased stretch (polar residues) spans 75 to 84; it reads GTSLQSQPDD. Positions 85–94 are enriched in basic and acidic residues; that stretch reads QNARESHDDN. The stretch at 104 to 135 forms a coiled coil; sequence DIIEESIRRVKEQKKSYAELRKAYKEFQKNFR. N150, N199, and N400 each carry an N-linked (GlcNAc...) asparagine glycan. Positions 426 to 429 match the Prevents secretion from ER motif; sequence HTEL.

The protein belongs to the SIL1 family.

It localises to the endoplasmic reticulum lumen. Its function is as follows. Required for protein translocation and folding in the endoplasmic reticulum (ER). Functions as a nucleotide exchange factor for an ER lumenal chaperone of HSP70 family. The protein is Nucleotide exchange factor Sil1 of Drosophila melanogaster (Fruit fly).